A 644-amino-acid chain; its full sequence is Large subunit GTPase 1 homolog (644 aa).

The tract at residues 1 to 31 (MGRRRAPGGGSLGRVLIRQQTQRSRSHRHTD) is disordered. 2 positions are modified to phosphoserine: S93 and S97. One can recognise a CP-type G domain in the interval 164–430 (WRQLWRVIER…LCDCPGLVMP (267 aa)). Residue 212–215 (NKAD) coordinates GTP. Residues 253–345 (KEEVDSVAGD…KNAENQQVNN (93 aa)) are disordered. The span at 302-326 (CQEDEEEDWQTCSEEDSVPEEEEGC) shows a compositional bias: acidic residues. GTP is bound by residues 379–386 (GYPNVGKS) and 423–426 (DCPG). Positions 618 to 644 (VPGKPWKKHGNRNKKEKSRRLYKHLDV) are disordered. The segment covering 622-644 (PWKKHGNRNKKEKSRRLYKHLDV) has biased composition (basic residues).

Belongs to the TRAFAC class YlqF/YawG GTPase family. LSG1 subfamily.

It localises to the cytoplasm. Its subcellular location is the endoplasmic reticulum. It is found in the nucleus. The protein localises to the cajal body. The catalysed reaction is GTP + H2O = GDP + phosphate + H(+). In terms of biological role, functions as a GTPase. May act by mediating the release of NMD3 from the 60S ribosomal subunit after export into the cytoplasm during the 60S ribosomal subunit maturation. The sequence is that of Large subunit GTPase 1 homolog from Mus musculus (Mouse).